The primary structure comprises 117 residues: Large ribosomal subunit protein bL19 (117 aa).

This sequence belongs to the bacterial ribosomal protein bL19 family.

Functionally, this protein is located at the 30S-50S ribosomal subunit interface and may play a role in the structure and function of the aminoacyl-tRNA binding site. In Blochmanniella floridana, this protein is Large ribosomal subunit protein bL19.